The sequence spans 313 residues: Ribosomal RNA small subunit methyltransferase H (313 aa).

S-adenosyl-L-methionine is bound by residues 35 to 37 (GGH), aspartate 55, phenylalanine 81, aspartate 103, and glutamine 110.

Belongs to the methyltransferase superfamily. RsmH family.

The protein localises to the cytoplasm. It catalyses the reaction cytidine(1402) in 16S rRNA + S-adenosyl-L-methionine = N(4)-methylcytidine(1402) in 16S rRNA + S-adenosyl-L-homocysteine + H(+). Specifically methylates the N4 position of cytidine in position 1402 (C1402) of 16S rRNA. The chain is Ribosomal RNA small subunit methyltransferase H from Pseudomonas aeruginosa (strain UCBPP-PA14).